We begin with the raw amino-acid sequence, 273 residues long: Dermonecrotic toxin LsaSicTox-alphaIB1aii (273 aa).

Residue His5 is part of the active site. Mg(2+)-binding residues include Glu25 and Asp27. His41 (nucleophile) is an active-site residue. 2 cysteine pairs are disulfide-bonded: Cys45–Cys51 and Cys47–Cys190. Asp85 serves as a coordination point for Mg(2+).

The protein belongs to the arthropod phospholipase D family. Class II subfamily. Requires Mg(2+) as cofactor. In terms of tissue distribution, expressed by the venom gland.

It is found in the secreted. It catalyses the reaction an N-(acyl)-sphingosylphosphocholine = an N-(acyl)-sphingosyl-1,3-cyclic phosphate + choline. The catalysed reaction is an N-(acyl)-sphingosylphosphoethanolamine = an N-(acyl)-sphingosyl-1,3-cyclic phosphate + ethanolamine. The enzyme catalyses a 1-acyl-sn-glycero-3-phosphocholine = a 1-acyl-sn-glycero-2,3-cyclic phosphate + choline. It carries out the reaction a 1-acyl-sn-glycero-3-phosphoethanolamine = a 1-acyl-sn-glycero-2,3-cyclic phosphate + ethanolamine. Its function is as follows. Dermonecrotic toxins cleave the phosphodiester linkage between the phosphate and headgroup of certain phospholipids (sphingolipid and lysolipid substrates), forming an alcohol (often choline) and a cyclic phosphate. This toxin acts on sphingomyelin (SM). It may also act on ceramide phosphoethanolamine (CPE), lysophosphatidylcholine (LPC) and lysophosphatidylethanolamine (LPE), but not on lysophosphatidylserine (LPS), and lysophosphatidylglycerol (LPG). It acts by transphosphatidylation, releasing exclusively cyclic phosphate products as second products. Induces dermonecrosis, hemolysis, increased vascular permeability, edema, inflammatory response, and platelet aggregation. The chain is Dermonecrotic toxin LsaSicTox-alphaIB1aii from Loxosceles sabina (Tucson recluse spider).